An 869-amino-acid chain; its full sequence is Probable beta-glucosidase F (869 aa).

The N-terminal stretch at 1-19 is a signal peptide; it reads MRVLSAIALVASLASSALS. Residues asparagine 77 and asparagine 261 are each glycosylated (N-linked (GlcNAc...) asparagine). Aspartate 289 is an active-site residue. N-linked (GlcNAc...) asparagine glycans are attached at residues asparagine 332, asparagine 364, asparagine 399, and asparagine 478. The tract at residues 677 to 697 is disordered; it reads STYPPTRPPKGPTPTYPTAIP. Pro residues predominate over residues 681–691; sequence PTRPPKGPTPT. Asparagine 728 is a glycosylation site (N-linked (GlcNAc...) asparagine).

This sequence belongs to the glycosyl hydrolase 3 family.

It localises to the secreted. It catalyses the reaction Hydrolysis of terminal, non-reducing beta-D-glucosyl residues with release of beta-D-glucose.. Its pathway is glycan metabolism; cellulose degradation. Functionally, beta-glucosidases are one of a number of cellulolytic enzymes involved in the degradation of cellulosic biomass. Catalyzes the last step releasing glucose from the inhibitory cellobiose. This is Probable beta-glucosidase F (bglF) from Aspergillus fumigatus (strain ATCC MYA-4609 / CBS 101355 / FGSC A1100 / Af293) (Neosartorya fumigata).